The chain runs to 486 residues: MGDNGDGGEKKELKENVKKGKELGRQAIGEGYINPSLQLARRLISLGVNVTFATTVLAGRRMKNKTHQTATTPGLSFATFSDGFDDETLKPNGDLTHYFSELRRCGSESLTHLITSAANEGRPITFVIYSLLLSWAADIASTYDIPSALFFAQPATVLALYFYYFHGYGDTICSKLQDPSSYIELPGLPLLTSQDMPSFFSPSGPHAFILPPMREQAEFLGRQSQPKVLVNTFDALEADALRAIDKLKMLAIGPLIPSALLGGNDSSDASFCGDLFQVSSEDYIEWLNSKPDSSVVYISVGSICVLSDEQEDELVHALLNSGHTFLWVKRSKENNEGVKQETDEEKLKKLEEQGKMVSWCRQVEVLKHPALGCFLTHCGWNSTIESLVSGLPVVAFPQQIDQATNAKLIEDVWKTGVRVKANTEGIVEREEIRRCLDLVMGSRDGQKEEIERNAKKWKELARQAIGEGGSSDSNLKTFLWEIDLEI.

UDP-alpha-D-glucose is bound by residues Ser-302, Cys-360, Gln-362, Trp-380, Asn-381, Ser-382, Glu-385, Asp-401, and Gln-402.

It belongs to the UDP-glycosyltransferase family. Highly expressed in young fruits 15 days after anthesis (15-DAA).

The enzyme catalyses mogrol + UDP-alpha-D-glucose = mogroside IE + UDP + H(+). The catalysed reaction is mogroside I-A1 + UDP-alpha-D-glucose = mogroside IIE + UDP + H(+). It catalyses the reaction mogroside II-A1 + UDP-alpha-D-glucose = mogroside IIIX + UDP + H(+). It carries out the reaction mogroside II-A + UDP-alpha-D-glucose = mogroside III + UDP + H(+). The protein operates within secondary metabolite biosynthesis; terpenoid biosynthesis. In terms of biological role, UDP-glycosyltransferase involved in the biosynthesis of cucurbitacin and mogroside tetracyclic triterpene natural products (e.g. siamenoside I and mogrosides IV, V and VI). Cucurbitacins have cytotoxic properties and exhibit deterrent taste as a defense barrier against herbivores. Mogrosides are nonsugar highly oxygenated compounds used as high-intensity zero-calorie sweeteners; they also possess pharmacological properties such as regulating immunity, lowering blood sugar and lipid levels, protecting the liver, and acting as antioxidants and antitumor agents. Catalyzes the C3 primary glucosylation of mogrol, mogroside I-A1, mogroside II-A1 and mogroside II-A. In Siraitia grosvenorii (Monk's fruit), this protein is Mogroside I-E synthase.